Reading from the N-terminus, the 254-residue chain is Transmembrane protein 70, mitochondrial (254 aa).

A mitochondrion-targeting transit peptide spans 1–78; sequence MLFLALGGPW…PVCWERGVRC (78 aa). Over 79-112 the chain is Mitochondrial matrix; sequence SHTQLDKSEDGRLIYTGNLARTVFGVKCFSYSTS. Residues 113-133 form a helical membrane-spanning segment; the sequence is LISLAFLPYIFAQNNVIFGSL. Topologically, residues 134–136 are mitochondrial intermembrane; that stretch reads PLQ. The chain crosses the membrane as a helical span at residues 137-157; it reads ILFYGTIGSFTVITPALLHFL. Residues 158 to 254 lie on the Mitochondrial matrix side of the membrane; the sequence is TKGYVIRLYH…SEKKQLKEEK (97 aa).

Belongs to the TMEM70 family. In terms of assembly, homooligomer. Interacts (homooligomer form) with ATP5MC1; this interaction facilitates the oligomer formation of subunit c/ATP5MC1 (c-ring) and the c-ring membrane insertion and also protects ATP5MC1 against intramitochondrial proteolysis. Interacts with the core subunits TMEM126B, NDUFAF1, ECSIT and ACAD9 of the MCIA complex. Interacts with ATP5MC3, TMEM242 and TIMMDC1.

The protein resides in the mitochondrion inner membrane. Scaffold protein that participates in the c-ring assembly of mitochondrial ATP synthase (F(1)F(0) ATP synthase or complex V) by facilitating the membrane insertion and oligomer formation of the subunit c/ATP5MC1 through its interaction. Therefore, participates in the early stage of mitochondrial ATP synthase biogenesis and also protects subunit c/ATP5MC1 against intramitochondrial proteolysis. In addition, binds the mitochondrial proton-transporting ATP synthase complexes I and may play a role in the stability of its membrane-bound subassemblies. The chain is Transmembrane protein 70, mitochondrial from Bos taurus (Bovine).